We begin with the raw amino-acid sequence, 156 residues long: Ribosome maturation factor RimP (156 aa).

It belongs to the RimP family.

Its subcellular location is the cytoplasm. Its function is as follows. Required for maturation of 30S ribosomal subunits. This is Ribosome maturation factor RimP from Shouchella clausii (strain KSM-K16) (Alkalihalobacillus clausii).